The chain runs to 337 residues: DNA-directed RNA polymerase subunit alpha (337 aa).

The interval 1 to 233 (MVREKVTVST…DLFIPFLHME (233 aa)) is alpha N-terminal domain (alpha-NTD). Positions 265–337 (KKIALKSIFI…FVIDLAKNKF (73 aa)) are alpha C-terminal domain (alpha-CTD).

The protein belongs to the RNA polymerase alpha chain family. As to quaternary structure, in plastids the minimal PEP RNA polymerase catalytic core is composed of four subunits: alpha, beta, beta', and beta''. When a (nuclear-encoded) sigma factor is associated with the core the holoenzyme is formed, which can initiate transcription.

The protein resides in the plastid. Its subcellular location is the chloroplast. The catalysed reaction is RNA(n) + a ribonucleoside 5'-triphosphate = RNA(n+1) + diphosphate. Functionally, DNA-dependent RNA polymerase catalyzes the transcription of DNA into RNA using the four ribonucleoside triphosphates as substrates. The polypeptide is DNA-directed RNA polymerase subunit alpha (Solanum lycopersicum (Tomato)).